The sequence spans 98 residues: NADH-ubiquinone oxidoreductase chain 4L (98 aa).

3 helical membrane-spanning segments follow: residues 1–21 (MSMV…GLLM), 29–49 (SLLC…MVVL), and 61–81 (IILL…LVMV).

It belongs to the complex I subunit 4L family. Core subunit of respiratory chain NADH dehydrogenase (Complex I) which is composed of 45 different subunits.

The protein resides in the mitochondrion inner membrane. The enzyme catalyses a ubiquinone + NADH + 5 H(+)(in) = a ubiquinol + NAD(+) + 4 H(+)(out). Core subunit of the mitochondrial membrane respiratory chain NADH dehydrogenase (Complex I) which catalyzes electron transfer from NADH through the respiratory chain, using ubiquinone as an electron acceptor. Part of the enzyme membrane arm which is embedded in the lipid bilayer and involved in proton translocation. The polypeptide is NADH-ubiquinone oxidoreductase chain 4L (MT-ND4L) (Acinonyx jubatus (Cheetah)).